Consider the following 216-residue polypeptide: U1 small nuclear ribonucleoprotein C (216 aa).

The Matrin-type zinc-finger motif lies at 4–36 (FFCDYCDVYLTHDSMSVRKAHNAGRNHLRNVVE). 3 stretches are compositionally biased toward pro residues: residues 68–80 (AMAP…PPFG), 87–198 (QLPP…PAPP), and 206–216 (PGPPPGLSEKR). The segment at 68 to 216 (AMAPPGAFPP…GPPPGLSEKR (149 aa)) is disordered.

Belongs to the U1 small nuclear ribonucleoprotein C family. U1 snRNP is composed of the 7 core Sm proteins B/B', D1, D2, D3, E, F and G that assemble in a heptameric protein ring on the Sm site of the small nuclear RNA to form the core snRNP, and at least 3 U1 snRNP-specific proteins U1-70K, U1-A and U1-C. U1-C interacts with U1 snRNA and the 5' splice-site region of the pre-mRNA.

Its subcellular location is the nucleus. In terms of biological role, component of the spliceosomal U1 snRNP, which is essential for recognition of the pre-mRNA 5' splice-site and the subsequent assembly of the spliceosome. U1-C is directly involved in initial 5' splice-site recognition for both constitutive and regulated alternative splicing. The interaction with the 5' splice-site seems to precede base-pairing between the pre-mRNA and the U1 snRNA. Stimulates commitment or early (E) complex formation by stabilizing the base pairing of the 5' end of the U1 snRNA and the 5' splice-site region. The protein is U1 small nuclear ribonucleoprotein C of Aspergillus fumigatus (strain ATCC MYA-4609 / CBS 101355 / FGSC A1100 / Af293) (Neosartorya fumigata).